The sequence spans 240 residues: Probable transcriptional regulatory protein VFMJ11_A0186 (240 aa).

The protein belongs to the TACO1 family.

The protein resides in the cytoplasm. This Aliivibrio fischeri (strain MJ11) (Vibrio fischeri) protein is Probable transcriptional regulatory protein VFMJ11_A0186.